Here is an 84-residue protein sequence, read N- to C-terminus: Small ribosomal subunit protein uS15 (84 aa).

Belongs to the universal ribosomal protein uS15 family. As to quaternary structure, part of the 30S ribosomal subunit. Forms a bridge to the 50S subunit in the 70S ribosome, contacting the 23S rRNA.

One of the primary rRNA binding proteins, it binds directly to 16S rRNA where it helps nucleate assembly of the platform of the 30S subunit by binding and bridging several RNA helices of the 16S rRNA. In terms of biological role, forms an intersubunit bridge (bridge B4) with the 23S rRNA of the 50S subunit in the ribosome. The sequence is that of Small ribosomal subunit protein uS15 from Thermosipho melanesiensis (strain DSM 12029 / CIP 104789 / BI429).